The following is a 292-amino-acid chain: Hemin import ATP-binding protein HmuV (292 aa).

One can recognise an ABC transporter domain in the interval 38 to 271 (LRADGIAVTR…ELLTRVYGHP (234 aa)). 70 to 77 (GPNGAGKS) provides a ligand contact to ATP.

Belongs to the ABC transporter superfamily. Heme (hemin) importer (TC 3.A.1.14.5) family. As to quaternary structure, the complex is composed of two ATP-binding proteins (HmuV), two transmembrane proteins (HmuU) and a solute-binding protein (HmuT).

The protein localises to the cell membrane. In terms of biological role, part of the ABC transporter complex HmuTUV involved in hemin import. Responsible for energy coupling to the transport system. This is Hemin import ATP-binding protein HmuV from Rhodococcus jostii (strain RHA1).